Here is a 490-residue protein sequence, read N- to C-terminus: Bifunctional protein HldE (490 aa).

Residues 1-330 (MFSFDALLQA…RRILPHASLA (330 aa)) form a ribokinase region. 205-208 (NRKE) is a binding site for ATP. Residue Asp275 is part of the active site. The cytidylyltransferase stretch occupies residues 358-490 (FTNGCFDILH…LVARAREGQS (133 aa)).

It in the N-terminal section; belongs to the carbohydrate kinase PfkB family. This sequence in the C-terminal section; belongs to the cytidylyltransferase family. In terms of assembly, homodimer.

It carries out the reaction D-glycero-beta-D-manno-heptose 7-phosphate + ATP = D-glycero-beta-D-manno-heptose 1,7-bisphosphate + ADP + H(+). The catalysed reaction is D-glycero-beta-D-manno-heptose 1-phosphate + ATP + H(+) = ADP-D-glycero-beta-D-manno-heptose + diphosphate. The protein operates within nucleotide-sugar biosynthesis; ADP-L-glycero-beta-D-manno-heptose biosynthesis; ADP-L-glycero-beta-D-manno-heptose from D-glycero-beta-D-manno-heptose 7-phosphate: step 1/4. Its pathway is nucleotide-sugar biosynthesis; ADP-L-glycero-beta-D-manno-heptose biosynthesis; ADP-L-glycero-beta-D-manno-heptose from D-glycero-beta-D-manno-heptose 7-phosphate: step 3/4. Catalyzes the phosphorylation of D-glycero-D-manno-heptose 7-phosphate at the C-1 position to selectively form D-glycero-beta-D-manno-heptose-1,7-bisphosphate. Its function is as follows. Catalyzes the ADP transfer from ATP to D-glycero-beta-D-manno-heptose 1-phosphate, yielding ADP-D-glycero-beta-D-manno-heptose. The protein is Bifunctional protein HldE of Rhodopseudomonas palustris (strain ATCC BAA-98 / CGA009).